Here is a 223-residue protein sequence, read N- to C-terminus: Cytidylate kinase (223 aa).

17–25 provides a ligand contact to ATP; the sequence is GPTASGKGT.

The protein belongs to the cytidylate kinase family. Type 1 subfamily.

Its subcellular location is the cytoplasm. The catalysed reaction is CMP + ATP = CDP + ADP. It carries out the reaction dCMP + ATP = dCDP + ADP. The polypeptide is Cytidylate kinase (Bordetella pertussis (strain Tohama I / ATCC BAA-589 / NCTC 13251)).